The following is a 702-amino-acid chain: Amino-acid racemase (702 aa).

The Cytoplasmic portion of the chain corresponds to 1–12; it reads MKHRANGIDLFR. The helical transmembrane segment at 13–33 threads the bilayer; it reads IFAATMVVAIHTFPFQSIAPF. Residues 34–39 are Extracellular-facing; the sequence is LDEVIT. Residues 40–60 traverse the membrane as a helical segment; sequence LTVFRVAVPFFFMITGYFLLG. Over 61 to 77 the chain is Cytoplasmic; it reads RLSLNFSYNNNQRVKKY. Residues 78–98 form a helical membrane-spanning segment; the sequence is LYKIGMIYLYSILLYFPLSLL. Over 99 to 120 the chain is Extracellular; the sequence is NGTISLKMNILLLLKVFIFDGT. The chain crosses the membrane as a helical span at residues 121-141; the sequence is FYHLWYFPASIIGTILVTLLL. A topological domain (cytoplasmic) is located at residue R142. A helical transmembrane segment spans residues 143–163; the sequence is SIGFKLTVAFSTCLYLVGLGG. The Extracellular portion of the chain corresponds to 164 to 191; sequence DSWYGITNQVPLLNKLYTFIFSWSDYTR. The chain crosses the membrane as a helical span at residues 192-212; sequence SGVFFTPVFLCLGIFAYRVSK. Over 213-218 the chain is Cytoplasmic; the sequence is KLTASK. The helical transmembrane segment at 219 to 239 threads the bilayer; it reads ILNLLFYVFIIGMTFESIFLH. Residues 240-248 are Extracellular-facing; it reads RFTNVKHDS. The helical transmembrane segment at 249-269 threads the bilayer; that stretch reads MYLLLPSCALILFLMLLNWQP. Over 270-276 the chain is Cytoplasmic; that stretch reads KLKVKES. The chain crosses the membrane as a helical span at residues 277–297; that stretch reads ADLTLLVYILHPLVIVIVHSI. Residues 298-307 lie on the Extracellular side of the membrane; the sequence is SKYIPILKNS. The chain crosses the membrane as a helical span at residues 308–328; it reads LLNFLLVVVCSFILAQLLLNL. Over 329 to 702 the chain is Cytoplasmic; it reads KRKLRVSKQK…LGSRLGTELN (374 aa). Residues 337 to 702 are racemase; the sequence is QKIPFERASK…LGSRLGTELN (366 aa). The active-site Proton acceptor is K375. K375 is subject to N6-(pyridoxal phosphate)lysine. R469 lines the substrate pocket. Catalysis depends on Y601, which acts as the Proton acceptor. M650 provides a ligand contact to substrate.

It in the N-terminal section; belongs to the acyltransferase 3 family. In the C-terminal section; belongs to the alanine racemase family. Pyridoxal 5'-phosphate is required as a cofactor.

The protein resides in the cell membrane. The sequence is that of Amino-acid racemase (vanTE) from Enterococcus faecalis (Streptococcus faecalis).